Here is a 98-residue protein sequence, read N- to C-terminus: U11-barytoxin-Tl1b (98 aa).

A signal peptide spans 1-21 (MKTLVLVAVLGLASLYLLSYA). Positions 22–50 (SEVQQLSRDEEEFRALVASFGGLFDTEER) are excised as a propeptide. Intrachain disulfides connect Cys57/Cys71, Cys64/Cys76, and Cys70/Cys89.

It belongs to the neurotoxin 10 (Hwtx-1) family. 25 (ICK4) subfamily. As to expression, expressed by the venom gland.

The protein resides in the secreted. Its function is as follows. Ion channel inhibitor. This is U11-barytoxin-Tl1b from Trittame loki (Brush-footed trapdoor spider).